We begin with the raw amino-acid sequence, 328 residues long: Porphobilinogen deaminase (328 aa).

Cys245 carries the S-(dipyrrolylmethanemethyl)cysteine modification.

The protein belongs to the HMBS family. As to quaternary structure, monomer. It depends on dipyrromethane as a cofactor.

The catalysed reaction is 4 porphobilinogen + H2O = hydroxymethylbilane + 4 NH4(+). It functions in the pathway porphyrin-containing compound metabolism; protoporphyrin-IX biosynthesis; coproporphyrinogen-III from 5-aminolevulinate: step 2/4. Its pathway is porphyrin-containing compound metabolism; chlorophyll biosynthesis. In terms of biological role, tetrapolymerization of the monopyrrole PBG into the hydroxymethylbilane pre-uroporphyrinogen in several discrete steps. In Gloeobacter violaceus (strain ATCC 29082 / PCC 7421), this protein is Porphobilinogen deaminase.